The chain runs to 596 residues: MEPELAAQKQPRPRRRSRRASGLSTEGATGPSADTSGSELDGRCSLRRGSSFTFLTPGPNWDFTLKRKRREKDDDVVSLSSLDLKEPSNKRVRPLARVTSLANLISPVRNGAVRRFGQTIQSFTLRGDHRSPASAQKFSSRSTVPTPAKRRSSALWSEMLDITMKESLTTREIRRQEAIYEMSRGEQDLIEDLKLARKAYHDPMLKLSIMSEEELTHIFGDLDSYIPLHEDLLTRIGEATKPDGTVEQIGHILVSWLPRLNAYRGYCSNQLAAKALLDQKKQDPRVQDFLQRCLESPFSRKLDLWSFLDIPRSRLVKYPLLLKEILKHTPKEHPDVQLLEDAILIIQGVLSDINLKKGESECQYYIDKLEYLDEKQRDPRIEASKVLLCHGELRSKSGHKLYIFLFQDILVLTRPVTRNERHSYQVYRQPIPVQELVLEDLQDGDVRMGGSFRGAFSNSEKAKNIFRIRFHDPSPAQSHTLQANDVFHKQQWFNCIRAAIAPFQSAGSPPELQGLPELHEECEGNHPSARKLTAQRRASTVSSVTQVEVDENAYRCGSGMQMAEDSKSLKTHQTQPGIRRARDKALSGGKRKETLV.

Met1 carries the N-acetylmethionine modification. The disordered stretch occupies residues 1–44 (MEPELAAQKQPRPRRRSRRASGLSTEGATGPSADTSGSELDGRC). A necessary for nuclear localization region spans residues 1–74 (MEPELAAQKQ…LKRKRREKDD (74 aa)). A Nuclear localization signal motif is present at residues 12–19 (RPRRRSRR). Residues Ser21 and Ser32 each carry the phosphoserine modification. Residues 22-38 (GLSTEGATGPSADTSGS) are compositionally biased toward polar residues. A Nuclear localization signal motif is present at residues 66-72 (KRKRREK). Ser100, Ser106, and Ser122 each carry phosphoserine. Positions 127–146 (GDHRSPASAQKFSSRSTVPT) are disordered. Over residues 133 to 145 (ASAQKFSSRSTVP) the composition is skewed to polar residues. The region spanning 174-356 (RRQEAIYEMS…QGVLSDINLK (183 aa)) is the DH domain. The 116-residue stretch at 386–501 (VLLCHGELRS…WFNCIRAAIA (116 aa)) folds into the PH domain. Ser508 carries the phosphoserine modification. Residues 562 to 596 (MAEDSKSLKTHQTQPGIRRARDKALSGGKRKETLV) form a disordered region.

As to quaternary structure, interacts with RHOA in its GTP- and GDP-bound states, and with CDC42 in its GTP-bound state. Interacts with the PDZ 1 domain of BAIAP1. Widely expressed.

The protein resides in the cytoplasm. It localises to the nucleus. Its function is as follows. Acts as a guanine nucleotide exchange factor (GEF) for RhoA GTPase. May be involved in activation of the SAPK/JNK pathway Stimulates genotoxic stress-induced RHOB activity in breast cancer cells leading to their cell death. The sequence is that of Neuroepithelial cell-transforming gene 1 protein (NET1) from Homo sapiens (Human).